A 149-amino-acid polypeptide reads, in one-letter code: Large ribosomal subunit protein bL9 (149 aa).

The protein belongs to the bacterial ribosomal protein bL9 family.

Binds to the 23S rRNA. This Klebsiella pneumoniae (strain 342) protein is Large ribosomal subunit protein bL9.